Here is a 104-residue protein sequence, read N- to C-terminus: Large ribosomal subunit protein eL30 (104 aa).

Belongs to the eukaryotic ribosomal protein eL30 family.

The sequence is that of Large ribosomal subunit protein eL30 (RPL30) from Tetrahymena thermophila (strain SB210).